The primary structure comprises 430 residues: Asparagine--tRNA ligase (430 aa).

Belongs to the class-II aminoacyl-tRNA synthetase family. As to quaternary structure, homodimer.

It localises to the cytoplasm. It catalyses the reaction tRNA(Asn) + L-asparagine + ATP = L-asparaginyl-tRNA(Asn) + AMP + diphosphate + H(+). In Listeria monocytogenes serotype 4b (strain F2365), this protein is Asparagine--tRNA ligase.